Consider the following 214-residue polypeptide: High frequency lysogenization protein HflD homolog (214 aa).

It belongs to the HflD family.

It localises to the cytoplasm. The protein resides in the cell inner membrane. The polypeptide is High frequency lysogenization protein HflD homolog (Chromohalobacter salexigens (strain ATCC BAA-138 / DSM 3043 / CIP 106854 / NCIMB 13768 / 1H11)).